We begin with the raw amino-acid sequence, 344 residues long: Phosphoribosylformylglycinamidine cyclo-ligase (344 aa).

This sequence belongs to the AIR synthase family.

It localises to the cytoplasm. It carries out the reaction 2-formamido-N(1)-(5-O-phospho-beta-D-ribosyl)acetamidine + ATP = 5-amino-1-(5-phospho-beta-D-ribosyl)imidazole + ADP + phosphate + H(+). It participates in purine metabolism; IMP biosynthesis via de novo pathway; 5-amino-1-(5-phospho-D-ribosyl)imidazole from N(2)-formyl-N(1)-(5-phospho-D-ribosyl)glycinamide: step 2/2. In Neisseria meningitidis serogroup C (strain 053442), this protein is Phosphoribosylformylglycinamidine cyclo-ligase.